The sequence spans 159 residues: S-ribosylhomocysteine lyase (159 aa).

Fe cation-binding residues include histidine 53, histidine 57, and cysteine 124.

Belongs to the LuxS family. Homodimer. The cofactor is Fe cation.

It carries out the reaction S-(5-deoxy-D-ribos-5-yl)-L-homocysteine = (S)-4,5-dihydroxypentane-2,3-dione + L-homocysteine. Its function is as follows. Involved in the synthesis of autoinducer 2 (AI-2) which is secreted by bacteria and is used to communicate both the cell density and the metabolic potential of the environment. The regulation of gene expression in response to changes in cell density is called quorum sensing. Catalyzes the transformation of S-ribosylhomocysteine (RHC) to homocysteine (HC) and 4,5-dihydroxy-2,3-pentadione (DPD). The sequence is that of S-ribosylhomocysteine lyase from Porphyromonas gingivalis (strain ATCC BAA-308 / W83).